The primary structure comprises 525 residues: Probable malate:quinone oxidoreductase (525 aa).

Belongs to the MQO family. FAD serves as cofactor.

It catalyses the reaction (S)-malate + a quinone = a quinol + oxaloacetate. The protein operates within carbohydrate metabolism; tricarboxylic acid cycle; oxaloacetate from (S)-malate (quinone route): step 1/1. This Serratia proteamaculans (strain 568) protein is Probable malate:quinone oxidoreductase.